We begin with the raw amino-acid sequence, 145 residues long: Hemoglobin subunit beta (145 aa).

The Globin domain occupies 1 to 145 (MLTAEEKAAV…VANALAHRYH (145 aa)). Residue T11 is modified to Phosphothreonine. K58 is modified (N6-acetyllysine). Residue H62 participates in heme b binding. K81 is subject to N6-acetyllysine. H91 contacts heme b. C92 is subject to S-nitrosocysteine.

It belongs to the globin family. Heterotetramer of two alpha chains and two beta chains. In terms of tissue distribution, red blood cells.

Its function is as follows. Involved in oxygen transport from the lung to the various peripheral tissues. The sequence is that of Hemoglobin subunit beta (HBB) from Ovis aries musimon (Mouflon).